Here is a 445-residue protein sequence, read N- to C-terminus: Branched-chain amino acid permease BraB (445 aa).

Helical transmembrane passes span 11–31, 45–65, 79–99, 122–142, 158–178, 192–212, 233–253, 275–295, 311–331, 339–359, 375–395, and 415–435; these read IIIG…IYPP, IGGF…AIAL, PVFG…LFAI, LSLL…ALNP, FTII…GLGA, FLEG…VVVV, AGVI…YLGA, YLFG…ACLT, LIPA…SLII, IIAF…VIIV, IACL…AAGF, and IGWV…TLFI.

This sequence belongs to the branched chain amino acid transporter family.

It localises to the cell membrane. In terms of biological role, branched-chain amino acid transport system which is involved in the uptake of isoleucine, valine and probably leucine. Together with BcaP and BrnQ, plays an important role in the activation of CodY, a branched-chain amino acid-responsive transcriptional regulator that controls the expression of several dozen transcription units in B.subtilis. In Bacillus subtilis (strain 168), this protein is Branched-chain amino acid permease BraB.